A 266-amino-acid polypeptide reads, in one-letter code: MASVFGKPRAGGGQQSAPLEVNLAILGRRGAGKSALTVKFLTRRFISEYDPNLEDTYSSEETVDHQPVHLRVMDTADLDTPRNCERYLNWAHAFLVVYSVDSRQSFEGSSSYLELLALHAKETQRSFPALLLGNKLDMAQYRQVTQAEGAALAGRFGCLFFEVSACLDFEHVQHVFHEAVREARRELEKNSLARPLFISEERAVHHQAPLTARHGLASCTFNTLSTTSLKEMPAVAQAKLVTVKSSRAQSKRKAPTLTLLKGFKIF.

GTP-binding positions include 27–34 (GRRGAGKS), 74–78 (DTADL), and 134–137 (NKLD).

It belongs to the small GTPase superfamily. Ras family.

It catalyses the reaction GTP + H2O = GDP + phosphate + H(+). The chain is Ras-like protein family member 12 (RASL12) from Bos taurus (Bovine).